A 200-amino-acid chain; its full sequence is Histone chaperone asf1a-B (200 aa).

This sequence belongs to the ASF1 family. As to quaternary structure, interacts with histone H3 (including both histone H3.1 and H3.3) and histone H4.

The protein localises to the nucleus. Its function is as follows. Histone chaperone that facilitates histone deposition and histone exchange and removal during nucleosome assembly and disassembly. In Xenopus laevis (African clawed frog), this protein is Histone chaperone asf1a-B (asf1ab).